The following is a 480-amino-acid chain: Aspartyl/glutamyl-tRNA(Asn/Gln) amidotransferase subunit B (480 aa).

Belongs to the GatB/GatE family. GatB subfamily. In terms of assembly, heterotrimer of A, B and C subunits.

It catalyses the reaction L-glutamyl-tRNA(Gln) + L-glutamine + ATP + H2O = L-glutaminyl-tRNA(Gln) + L-glutamate + ADP + phosphate + H(+). The enzyme catalyses L-aspartyl-tRNA(Asn) + L-glutamine + ATP + H2O = L-asparaginyl-tRNA(Asn) + L-glutamate + ADP + phosphate + 2 H(+). Its function is as follows. Allows the formation of correctly charged Asn-tRNA(Asn) or Gln-tRNA(Gln) through the transamidation of misacylated Asp-tRNA(Asn) or Glu-tRNA(Gln) in organisms which lack either or both of asparaginyl-tRNA or glutaminyl-tRNA synthetases. The reaction takes place in the presence of glutamine and ATP through an activated phospho-Asp-tRNA(Asn) or phospho-Glu-tRNA(Gln). This Streptococcus thermophilus (strain ATCC BAA-491 / LMD-9) protein is Aspartyl/glutamyl-tRNA(Asn/Gln) amidotransferase subunit B.